We begin with the raw amino-acid sequence, 1139 residues long: Solute carrier family 12 member 5 (1139 aa).

Disordered stretches follow at residues 1-63 (MSRR…GKEY) and 92-116 (TNLP…KPVQ). At 1-98 (MSRRFTVTSL…ANYTNLPQGS (98 aa)) the chain is on the cytoplasmic side. The span at 19 to 45 (PDPESRRHSVADPRHLPGEDVKGDGNP) shows a compositional bias: basic and acidic residues. Positions 46–55 (KESSPFINST) are enriched in polar residues. Thr57 is modified (phosphothreonine). Positions 98–111 (SREHEEAENNEGGK) are enriched in basic and acidic residues. A discontinuously helical transmembrane segment spans residues 99-120 (REHEEAENNEGGKKKPVQAPRM). Lys113 contributes to the K(+) binding site. Topologically, residues 121–129 (GTFMGVYLP) are extracellular. Residues 130-151 (CLQNIFGVILFLRLTWVVGIAG) traverse the membrane as a helical segment. At 152 to 174 (IMESFCMVFICCSCTMLTAISMS) the chain is on the cytoplasmic side. The chain crosses the membrane as a helical span at residues 175–203 (AIATNGVVPAGGSYYMISRSLGPEFGGAV). Ala184 is a binding site for chloride. Residues 204 to 229 (GLCFYLGTTFAGAMYILGTIEILLAY) lie on the Extracellular side of the membrane. The next 2 helical transmembrane spans lie at 230-250 (LFPA…AAML) and 251-276 (NNMR…KYVN). Over 277–402 (KFALVFLGCV…ERSGMTSVGL (126 aa)) the chain is Extracellular. Cys310 and Cys325 form a disulfide bridge. Asn314, Asn333, Asn351, and Asn362 each carry an N-linked (GlcNAc...) asparagine glycan. A disulfide bridge connects residues Cys345 and Cys354. The helical transmembrane segment at 403–420 (ADGTPIDMDHPYVFSDMT) threads the bilayer. Met410 is a K(+) binding site. Chloride-binding residues include Tyr414 and Val415. Over 421 to 429 (SYFTLLVGI) the chain is Cytoplasmic. The chain crosses the membrane as a helical span at residues 430–453 (YFPSVTGIMAGSNRSGDLRDAQKS). Asp446 lines the K(+) pocket. Over 454-485 (IPTGTILAIATTSAVYISSVVLFGACIEGVVL) the chain is Extracellular. A helical membrane pass occupies residues 486-513 (RDKFGEAVNGNLVVGTLAWPSPWVIVIG). Residues 514-534 (SFFSTCGAGLQSLTGAPRLLQ) are Cytoplasmic-facing. The next 2 helical transmembrane spans lie at 535–555 (AISR…KANG) and 556–578 (EPTW…ASLD). Glu569 contacts chloride. The Cytoplasmic portion of the chain corresponds to 579–592 (EVAPILSMFFLMCY). The next 2 helical transmembrane spans lie at 593–615 (MFVN…PRFR) and 616–632 (YYHW…CLAL). Residues 633 to 1139 (MFICSWYYAL…GGREVITIYS (507 aa)) are Cytoplasmic-facing. Positions 667-681 (GIRGLSLSAARYALL) are scissor helix. Thr929 is subject to Phosphothreonine; by OXSR1 and STK39. A disordered region spans residues 942–1052 (MHLTKNERER…GPSPVSSEGI (111 aa)). Residues 945 to 962 (TKNEREREIQSITDESRG) are compositionally biased toward basic and acidic residues. A compositionally biased stretch (acidic residues) spans 982–994 (TAGDSEEKPEEEV). Residues 1003 to 1012 (PSCPSSSPSP) show a composition bias toward low complexity. Residues 1023–1042 (DPEKVHLTWTKDKSVAEKNK) are compositionally biased toward basic and acidic residues. Thr1030 carries the phosphothreonine; by OXSR1 and STK39 modification. Residues Ser1045, Ser1048, and Ser1049 each carry the phosphoserine modification.

It belongs to the SLC12A transporter family. K/Cl co-transporter subfamily. Homodimer; adopts a domain-swap conformation at the scissor helices connecting the transmembrane domain and C-terminal domain. Heterodimer with K-Cl cotransporters SLC12A6 and SLC12A7. Interacts with AP2A1. In terms of processing, phosphorylated at Thr-929 and Thr-1030 by OXSR1/OSR1 and STK39/SPAK downstream of WNK kinases (WNK1, WNK2, WNK3 or WNK4), inhibiting the potassium-chloride cotransport activity. In terms of tissue distribution, brain specific. Detected in neuronal cells.

The protein resides in the cell membrane. Its subcellular location is the cell projection. It is found in the dendrite. It carries out the reaction K(+)(in) + chloride(in) = K(+)(out) + chloride(out). With respect to regulation, inhibited following phosphorylation by OXSR1/OSR1 and STK39/SPAK: phosphorylation takes place downstream of WNK kinases (WNK1, WNK2, WNK3 or WNK4) in response to hyperosmotic stress and subsequent cell shrinkage. Its function is as follows. Mediates electroneutral potassium-chloride cotransport in mature neurons and is required for neuronal Cl(-) homeostasis. As major extruder of intracellular chloride, it establishes the low neuronal Cl(-) levels required for chloride influx after binding of GABA-A and glycine to their receptors, with subsequent hyperpolarization and neuronal inhibition. Involved in the regulation of dendritic spine formation and maturation. This Homo sapiens (Human) protein is Solute carrier family 12 member 5.